A 287-amino-acid chain; its full sequence is Large ribosomal subunit protein uL3 (287 aa).

A disordered region spans residues 228–287; sequence KAPEAKPAKLSKKKQAKELAKAQAANQQTVEAKVDTPVVEPKPTEVKKAAPVVEKKGEDK. The span at 269-287 shows a compositional bias: basic and acidic residues; the sequence is KPTEVKKAAPVVEKKGEDK.

The protein belongs to the universal ribosomal protein uL3 family. As to quaternary structure, part of the 50S ribosomal subunit. Forms a cluster with proteins L14 and L19.

In terms of biological role, one of the primary rRNA binding proteins, it binds directly near the 3'-end of the 23S rRNA, where it nucleates assembly of the 50S subunit. The polypeptide is Large ribosomal subunit protein uL3 (Mycoplasma pneumoniae (strain ATCC 29342 / M129 / Subtype 1) (Mycoplasmoides pneumoniae)).